Reading from the N-terminus, the 434-residue chain is Glucose-1-phosphate adenylyltransferase (434 aa).

Alpha-D-glucose 1-phosphate-binding positions include Tyr-112, Gly-178, 193-194 (EK), and Ser-211.

It belongs to the bacterial/plant glucose-1-phosphate adenylyltransferase family. As to quaternary structure, homotetramer.

The catalysed reaction is alpha-D-glucose 1-phosphate + ATP + H(+) = ADP-alpha-D-glucose + diphosphate. It participates in glycan biosynthesis; glycogen biosynthesis. Involved in the biosynthesis of ADP-glucose, a building block required for the elongation reactions to produce glycogen. Catalyzes the reaction between ATP and alpha-D-glucose 1-phosphate (G1P) to produce pyrophosphate and ADP-Glc. The polypeptide is Glucose-1-phosphate adenylyltransferase (Mannheimia succiniciproducens (strain KCTC 0769BP / MBEL55E)).